The sequence spans 449 residues: Flavonol 7-O-beta-glucosyltransferase UGT74F1 (449 aa).

His18 serves as the catalytic Proton acceptor. His18 contributes to the an anthocyanidin binding site. Residue Asp111 is the Charge relay of the active site. UDP-alpha-D-glucose contacts are provided by Thr133, Gln327, His342, Trp345, Asn346, Ser347, Glu350, Asp366, and Gln367.

Belongs to the UDP-glycosyltransferase family.

The catalysed reaction is a 7-O-hydroxy-flavonol + UDP-alpha-D-glucose = a flavonol 7-O-beta-D-glucoside + UDP + H(+). In terms of biological role, possesses quercetin 7-O-glucosyltransferase and 4'-O-glucosyltransferase activities in vitro. Also active in vitro on benzoates and benzoate derivatives. Has low affinity for the tryptophan precursor anthranilate. Catalyzes the formation of anthranilate glucose ester. Is a minor source of this activity in the plant. This Arabidopsis thaliana (Mouse-ear cress) protein is Flavonol 7-O-beta-glucosyltransferase UGT74F1.